The primary structure comprises 278 residues: ATP synthase subunit a (278 aa).

The next 6 membrane-spanning stretches (helical) occupy residues 41 to 61 (FLNIDSLFFSFFLGIIFLLFF), 108 to 128 (LTIFVWLFLMNLMDLIPVDFV), 149 to 168 (INITLSMSLGVFLLILYFGI), 180 to 200 (FFFQPFNNYLLIPVNLVLELI), 222 to 242 (LIFILISGLLPWWLQWILSVP), and 244 to 264 (AIFHILIIILQAFIFMILTII).

Belongs to the ATPase A chain family. In terms of assembly, F-type ATPases have 2 components, CF(1) - the catalytic core - and CF(0) - the membrane proton channel. CF(1) has five subunits: alpha(3), beta(3), gamma(1), delta(1), epsilon(1). CF(0) has three main subunits: a(1), b(2) and c(9-12). The alpha and beta chains form an alternating ring which encloses part of the gamma chain. CF(1) is attached to CF(0) by a central stalk formed by the gamma and epsilon chains, while a peripheral stalk is formed by the delta and b chains.

It is found in the cell membrane. Key component of the proton channel; it plays a direct role in the translocation of protons across the membrane. In Wigglesworthia glossinidia brevipalpis, this protein is ATP synthase subunit a.